We begin with the raw amino-acid sequence, 367 residues long: Phospho-N-acetylmuramoyl-pentapeptide-transferase (367 aa).

The next 10 membrane-spanning stretches (helical) occupy residues 16–36 (LLLAAAAFVLTLIIGGWWVRF), 62–82 (TMGGIMIVSTVLILTILFNLV), 87–107 (MLLPLGVMVSFAVLGAIDDWL), 125–145 (FWIMMAVAFVASLALYLPQPY), 158–178 (VGEVNIGLWFIPIAVLIIVFI), 190–210 (SLAGWNLTLAFGAYGVITFLA), 214–234 (LTNLMAFCFTVVGACAAFLWY), 240–260 (QVFMGDLGALALGATLAVVAL), 264–284 (QWLLLPVIGIVFVVEALSTMI), and 326–346 (FVLIGTVAAMVGISLALIFGP).

It belongs to the glycosyltransferase 4 family. MraY subfamily. It depends on Mg(2+) as a cofactor.

The protein localises to the cell membrane. It catalyses the reaction UDP-N-acetyl-alpha-D-muramoyl-L-alanyl-gamma-D-glutamyl-meso-2,6-diaminopimeloyl-D-alanyl-D-alanine + di-trans,octa-cis-undecaprenyl phosphate = di-trans,octa-cis-undecaprenyl diphospho-N-acetyl-alpha-D-muramoyl-L-alanyl-D-glutamyl-meso-2,6-diaminopimeloyl-D-alanyl-D-alanine + UMP. It functions in the pathway cell wall biogenesis; peptidoglycan biosynthesis. Its function is as follows. Catalyzes the initial step of the lipid cycle reactions in the biosynthesis of the cell wall peptidoglycan: transfers peptidoglycan precursor phospho-MurNAc-pentapeptide from UDP-MurNAc-pentapeptide onto the lipid carrier undecaprenyl phosphate, yielding undecaprenyl-pyrophosphoryl-MurNAc-pentapeptide, known as lipid I. The chain is Phospho-N-acetylmuramoyl-pentapeptide-transferase from Chloroflexus aurantiacus (strain ATCC 29366 / DSM 635 / J-10-fl).